The primary structure comprises 261 residues: Triosephosphate isomerase (261 aa).

D-glyceraldehyde 3-phosphate contacts are provided by N11 and K13. Residue H102 is the Electrophile of the active site. E174 functions as the Proton acceptor in the catalytic mechanism. G180, L239, and G241 together coordinate D-glyceraldehyde 3-phosphate.

Belongs to the triosephosphate isomerase family. Homodimer.

It carries out the reaction D-glyceraldehyde 3-phosphate = dihydroxyacetone phosphate. Its pathway is carbohydrate biosynthesis; gluconeogenesis. It participates in carbohydrate degradation; glycolysis; D-glyceraldehyde 3-phosphate from glycerone phosphate: step 1/1. Catalyzes the interconversion of glyceraldehyde 3-phosphate and dihydroxyacetone phosphate in the glycolytic and gluconeogenic pathways. This chain is Triosephosphate isomerase, found in Entamoeba histolytica (strain ATCC 30459 / HM-1:IMSS / ABRM).